The primary structure comprises 223 residues: MIF4G domain-containing protein B (223 aa).

An MIF4G domain is found at 9-206 (DYKIQGFDAD…LEMIEYRAAG (198 aa)).

Belongs to the MIF4GD family. Interacts with eif4g1, eif4g2 and slbp; probably tethered by SLBP to the 3'-end of mRNAs ending with the histone stem-loop, it also interacts with eif4g1 which is bound to their 5'-end.

Its subcellular location is the cytoplasm. It is found in the nucleus. In terms of biological role, functions in replication-dependent translation of histone mRNAs which differ from other eukaryotic mRNAs in that they do not end with a poly-A tail but a stem-loop. May participate in circularizing those mRNAs specifically enhancing their translation. The sequence is that of MIF4G domain-containing protein B (mif4gd-b) from Xenopus laevis (African clawed frog).